We begin with the raw amino-acid sequence, 434 residues long: Nicotinate phosphoribosyltransferase (434 aa).

His-242 bears the Phosphohistidine; by autocatalysis mark.

The protein belongs to the NAPRTase family. Transiently phosphorylated on a His residue during the reaction cycle. Phosphorylation strongly increases the affinity for substrates and increases the rate of nicotinate D-ribonucleotide production. Dephosphorylation regenerates the low-affinity form of the enzyme, leading to product release.

It carries out the reaction nicotinate + 5-phospho-alpha-D-ribose 1-diphosphate + ATP + H2O = nicotinate beta-D-ribonucleotide + ADP + phosphate + diphosphate. The protein operates within cofactor biosynthesis; NAD(+) biosynthesis; nicotinate D-ribonucleotide from nicotinate: step 1/1. Catalyzes the synthesis of beta-nicotinate D-ribonucleotide from nicotinate and 5-phospho-D-ribose 1-phosphate at the expense of ATP. In Rhizobium etli (strain CIAT 652), this protein is Nicotinate phosphoribosyltransferase.